A 561-amino-acid chain; its full sequence is Asparagine synthetase [glutamine-hydrolyzing] (561 aa).

Catalysis depends on C2, which acts as the For GATase activity. The Glutamine amidotransferase type-2 domain maps to 2–191 (CGIWALFGSD…PGHYEVLDLK (190 aa)). L-glutamine contacts are provided by residues 49–53 (RLAVV), 75–77 (NGE), and D97. The region spanning 213–536 (HAIYDSVEKL…PGRADWLTHY (324 aa)) is the Asparagine synthetase domain. Residues L256, I288, and 363-364 (SG) contribute to the ATP site. N6-acetyllysine is present on K385. T545 is modified (phosphothreonine). S557 is modified (phosphoserine).

The catalysed reaction is L-aspartate + L-glutamine + ATP + H2O = L-asparagine + L-glutamate + AMP + diphosphate + H(+). Its pathway is amino-acid biosynthesis; L-asparagine biosynthesis; L-asparagine from L-aspartate (L-Gln route): step 1/1. The polypeptide is Asparagine synthetase [glutamine-hydrolyzing] (Asns) (Mus musculus (Mouse)).